An 88-amino-acid chain; its full sequence is Small ribosomal subunit protein uS15 (88 aa).

This sequence belongs to the universal ribosomal protein uS15 family. As to quaternary structure, part of the 30S ribosomal subunit. Forms a bridge to the 50S subunit in the 70S ribosome, contacting the 23S rRNA.

Its function is as follows. One of the primary rRNA binding proteins, it binds directly to 16S rRNA where it helps nucleate assembly of the platform of the 30S subunit by binding and bridging several RNA helices of the 16S rRNA. Forms an intersubunit bridge (bridge B4) with the 23S rRNA of the 50S subunit in the ribosome. This is Small ribosomal subunit protein uS15 from Polaromonas naphthalenivorans (strain CJ2).